A 179-amino-acid polypeptide reads, in one-letter code: Large ribosomal subunit protein uL5 (179 aa).

The protein belongs to the universal ribosomal protein uL5 family. In terms of assembly, part of the 50S ribosomal subunit; part of the 5S rRNA/L5/L18/L25 subcomplex. Contacts the 5S rRNA and the P site tRNA. Forms a bridge to the 30S subunit in the 70S ribosome.

Its function is as follows. This is one of the proteins that bind and probably mediate the attachment of the 5S RNA into the large ribosomal subunit, where it forms part of the central protuberance. In the 70S ribosome it contacts protein S13 of the 30S subunit (bridge B1b), connecting the 2 subunits; this bridge is implicated in subunit movement. Contacts the P site tRNA; the 5S rRNA and some of its associated proteins might help stabilize positioning of ribosome-bound tRNAs. The polypeptide is Large ribosomal subunit protein uL5 (Citrobacter koseri (strain ATCC BAA-895 / CDC 4225-83 / SGSC4696)).